Reading from the N-terminus, the 101-residue chain is Small ribosomal subunit protein uS14 (101 aa).

The protein belongs to the universal ribosomal protein uS14 family. As to quaternary structure, part of the 30S ribosomal subunit. Contacts proteins S3 and S10.

Functionally, binds 16S rRNA, required for the assembly of 30S particles and may also be responsible for determining the conformation of the 16S rRNA at the A site. The chain is Small ribosomal subunit protein uS14 from Chlamydia muridarum (strain MoPn / Nigg).